The sequence spans 141 residues: Lutropin subunit beta (141 aa).

Residues 1-20 (MERLQGLLLWLLLSPSVVWA) form the signal peptide. Intrachain disulfides connect Cys-29–Cys-77, Cys-43–Cys-92, Cys-46–Cys-130, Cys-54–Cys-108, Cys-58–Cys-110, and Cys-113–Cys-120. Residue Asn-33 is glycosylated (N-linked (GlcNAc...) asparagine).

This sequence belongs to the glycoprotein hormones subunit beta family. As to quaternary structure, heterodimer of a common alpha chain and a unique beta chain which confers biological specificity to thyrotropin, lutropin, follitropin and gonadotropin.

The protein localises to the secreted. Functionally, promotes spermatogenesis and ovulation by stimulating the testes and ovaries to synthesize steroids. This Rattus norvegicus (Rat) protein is Lutropin subunit beta (Lhb).